We begin with the raw amino-acid sequence, 251 residues long: 5'-nucleotidase SurE (251 aa).

A divalent metal cation is bound by residues Asp-8, Asp-9, Ser-39, and Asn-90.

This sequence belongs to the SurE nucleotidase family. It depends on a divalent metal cation as a cofactor.

The protein localises to the cytoplasm. The enzyme catalyses a ribonucleoside 5'-phosphate + H2O = a ribonucleoside + phosphate. Nucleotidase that shows phosphatase activity on nucleoside 5'-monophosphates. The chain is 5'-nucleotidase SurE from Colwellia psychrerythraea (strain 34H / ATCC BAA-681) (Vibrio psychroerythus).